The following is a 321-amino-acid chain: Gap junction delta-2 protein (321 aa).

Residues M1 to S19 lie on the Cytoplasmic side of the membrane. A helical membrane pass occupies residues T20 to G42. Topologically, residues E43 to H75 are extracellular. Residues I76–V98 traverse the membrane as a helical segment. At H99–R197 the chain is on the cytoplasmic side. Positions R118–E141 are disordered. Gly residues predominate over residues G125 to G137. A helical membrane pass occupies residues F198–L220. The Extracellular segment spans residues Y221–V252. A helical transmembrane segment spans residues F253–L275. The Cytoplasmic portion of the chain corresponds to G276 to V321.

This sequence belongs to the connexin family. Delta-type subfamily. A connexon is composed of a hexamer of connexins. Highly expressed in neurons.

The protein localises to the cell membrane. The protein resides in the cell junction. Its subcellular location is the gap junction. One gap junction consists of a cluster of closely packed pairs of transmembrane channels, the connexons, through which materials of low MW diffuse from one cell to a neighboring cell. This is Gap junction delta-2 protein (GJD2) from Homo sapiens (Human).